Consider the following 509-residue polypeptide: L-arabinose isomerase (509 aa).

Residues glutamate 313, glutamate 340, histidine 357, and histidine 456 each coordinate Mn(2+).

This sequence belongs to the arabinose isomerase family. Mn(2+) serves as cofactor.

It catalyses the reaction beta-L-arabinopyranose = L-ribulose. It participates in carbohydrate degradation; L-arabinose degradation via L-ribulose; D-xylulose 5-phosphate from L-arabinose (bacterial route): step 1/3. In terms of biological role, catalyzes the conversion of L-arabinose to L-ribulose. The protein is L-arabinose isomerase of Bacteroides thetaiotaomicron (strain ATCC 29148 / DSM 2079 / JCM 5827 / CCUG 10774 / NCTC 10582 / VPI-5482 / E50).